We begin with the raw amino-acid sequence, 230 residues long: Large ribosomal subunit protein uL1 (230 aa).

It belongs to the universal ribosomal protein uL1 family. In terms of assembly, part of the 50S ribosomal subunit.

In terms of biological role, binds directly to 23S rRNA. The L1 stalk is quite mobile in the ribosome, and is involved in E site tRNA release. Protein L1 is also a translational repressor protein, it controls the translation of the L11 operon by binding to its mRNA. In Nitrosospira multiformis (strain ATCC 25196 / NCIMB 11849 / C 71), this protein is Large ribosomal subunit protein uL1.